The following is a 240-amino-acid chain: Probable alpha-aspartyl dipeptidase (240 aa).

Residues serine 125, aspartate 140, and histidine 162 each act as charge relay system in the active site.

It belongs to the peptidase S51 family.

Its subcellular location is the cytoplasm. The catalysed reaction is Dipeptidase E catalyzes the hydrolysis of dipeptides Asp-|-Xaa. It does not act on peptides with N-terminal Glu, Asn or Gln, nor does it cleave isoaspartyl peptides.. Functionally, hydrolyzes dipeptides containing N-terminal aspartate residues. This chain is Probable alpha-aspartyl dipeptidase, found in Drosophila melanogaster (Fruit fly).